Here is a 455-residue protein sequence, read N- to C-terminus: Kynurenine--oxoglutarate transaminase 3 (455 aa).

Residue Gly71 coordinates substrate. At Lys116 the chain carries N6-acetyllysine; alternate. N6-succinyllysine; alternate is present on Lys116. Residue Asn218 coordinates substrate. N6-(pyridoxal phosphate)lysine is present on Lys280. Residue Arg430 coordinates substrate.

It belongs to the class-I pyridoxal-phosphate-dependent aminotransferase family. In terms of assembly, homodimer. Pyridoxal 5'-phosphate serves as cofactor.

It catalyses the reaction L-kynurenine + 2-oxoglutarate = kynurenate + L-glutamate + H2O. It carries out the reaction L-kynurenine + glyoxylate = kynurenate + glycine + H2O. The enzyme catalyses 3-hydroxy-L-kynurenine + glyoxylate = xanthurenate + glycine + H2O. The catalysed reaction is an S-substituted L-cysteine + H2O = a thiol + pyruvate + NH4(+). Its pathway is amino-acid degradation; L-kynurenine degradation; kynurenate from L-kynurenine: step 1/2. In terms of biological role, catalyzes the irreversible transamination of the L-tryptophan metabolite L-kynurenine to form kynurenic acid (KA), an intermediate in the tryptophan catabolic pathway which is also a broad spectrum antagonist of the three ionotropic excitatory amino acid receptors among others. May catalyze the beta-elimination of S-conjugates and Se-conjugates of L-(seleno)cysteine, resulting in the cleavage of the C-S or C-Se bond. Has transaminase activity towards L-kynurenine, tryptophan, phenylalanine, serine, cysteine, methionine, histidine, glutamine and asparagine with glyoxylate as an amino group acceptor (in vitro). Has lower activity with 2-oxoglutarate as amino group acceptor (in vitro). The chain is Kynurenine--oxoglutarate transaminase 3 from Bos taurus (Bovine).